The chain runs to 208 residues: Ribosomal RNA small subunit methyltransferase G (208 aa).

S-adenosyl-L-methionine contacts are provided by residues Gly78, Phe83, 101 to 103 (ERS), 129 to 130 (IE), and Arg142.

The protein belongs to the methyltransferase superfamily. RNA methyltransferase RsmG family.

It is found in the cytoplasm. Specifically methylates the N7 position of a guanine in 16S rRNA. The chain is Ribosomal RNA small subunit methyltransferase G from Borreliella burgdorferi (strain ZS7) (Borrelia burgdorferi).